Consider the following 685-residue polypeptide: E3 ubiquitin-protein ligase RNF6 (685 aa).

3 stretches are compositionally biased toward basic and acidic residues: residues 1–10 (MNQSRSRSDG), 17–29 (PQDH…ERRW), and 88–107 (DLRD…SSHE). Disordered stretches follow at residues 1–29 (MNQS…ERRW), 81–107 (EQLA…SSHE), 121–142 (GNAT…RTNP), 168–273 (DYTD…REGQ), 286–345 (RSNV…RRRG), and 499–576 (EADS…NPNN). Polar residues-rich tracts occupy residues 199–213 (SQTS…SNIP), 250–264 (ASRT…QSGG), and 286–297 (RSNVTVRNTNQR). Low complexity predominate over residues 303–313 (LRSTSNSRSRS). Polar residues-rich tracts occupy residues 314 to 325 (PIQRQSGTVYHN) and 519 to 528 (ELSNLGTDNN). The RING-type zinc-finger motif lies at 632–673 (CSVCISDYVTGNKLRQLPCMHEFHIHCIDRWLSENCTCPICR).

The protein belongs to the RNF12 family. In terms of tissue distribution, weakly expressed in peripheral blood, spleen, prostate, testis and ovary. According to a report, it is preferentially expressed in testis and ovary and hardly detected in other tissues.

Its subcellular location is the nucleus. It localises to the cytoplasm. The protein localises to the cell projection. It is found in the axon. The protein resides in the PML body. The enzyme catalyses S-ubiquitinyl-[E2 ubiquitin-conjugating enzyme]-L-cysteine + [acceptor protein]-L-lysine = [E2 ubiquitin-conjugating enzyme]-L-cysteine + N(6)-ubiquitinyl-[acceptor protein]-L-lysine.. Its pathway is protein modification; protein ubiquitination. In terms of biological role, E3 ubiquitin-protein ligase mediating 'Lys-48'-linked polyubiquitination of LIMK1 and its subsequent targeting to the proteasome for degradation. Negatively regulates axonal outgrowth through regulation of the LIMK1 turnover. Mediates 'Lys-6' and 'Lys-27'-linked polyubiquitination of AR/androgen receptor thereby modulating its transcriptional activity. May also bind DNA and function as a transcriptional regulator. Mediates polyubiquitination of QKI in macrophages, leading to its degradation. The chain is E3 ubiquitin-protein ligase RNF6 from Homo sapiens (Human).